We begin with the raw amino-acid sequence, 313 residues long: Probable cell division protein WhiA (313 aa).

Residues 277–311 (SLKEVAAQVPDGPISKSGVNHRFQKIREIAKQLKE) constitute a DNA-binding region (H-T-H motif).

It belongs to the WhiA family.

Functionally, involved in cell division and chromosome segregation. This is Probable cell division protein WhiA from Lactobacillus johnsonii (strain CNCM I-12250 / La1 / NCC 533).